The chain runs to 48 residues: Large ribosomal subunit protein bL33B (48 aa).

It belongs to the bacterial ribosomal protein bL33 family.

The sequence is that of Large ribosomal subunit protein bL33B from Lactococcus lactis subsp. cremoris (strain MG1363).